Reading from the N-terminus, the 180-residue chain is Probable cobalt-precorrin-6B C(15)-methyltransferase (decarboxylating) (180 aa).

Residues Thr-16, 40-44 (GCGSG), Asp-61, and Ala-89 each bind S-adenosyl-L-methionine.

It belongs to the methyltransferase superfamily. Archaeal-type CbiT family.

The enzyme catalyses Co-precorrin-6B + S-adenosyl-L-methionine = Co-precorrin-7 + S-adenosyl-L-homocysteine + CO2. The protein operates within cofactor biosynthesis; adenosylcobalamin biosynthesis; cob(II)yrinate a,c-diamide from sirohydrochlorin (anaerobic route): step 8/10. Functionally, catalyzes the methylation of C-15 in cobalt-precorrin-6B followed by the decarboxylation of C-12 to form cobalt-precorrin-7. The polypeptide is Probable cobalt-precorrin-6B C(15)-methyltransferase (decarboxylating) (Methanococcus vannielii (strain ATCC 35089 / DSM 1224 / JCM 13029 / OCM 148 / SB)).